Consider the following 227-residue polypeptide: Urease accessory protein UreF (227 aa).

Belongs to the UreF family. As to quaternary structure, ureD, UreF and UreG form a complex that acts as a GTP-hydrolysis-dependent molecular chaperone, activating the urease apoprotein by helping to assemble the nickel containing metallocenter of UreC. The UreE protein probably delivers the nickel.

Its subcellular location is the cytoplasm. In terms of biological role, required for maturation of urease via the functional incorporation of the urease nickel metallocenter. This chain is Urease accessory protein UreF, found in Actinobacillus pleuropneumoniae (Haemophilus pleuropneumoniae).